The chain runs to 130 residues: Nascent polypeptide-associated complex protein (130 aa).

An NAC-A/B domain is found at 8-75 (PKMMRQMQKM…AKNIKKDDIK (68 aa)).

This sequence belongs to the NAC-alpha family. In terms of assembly, homodimer. Interacts with the ribosome. Binds ribosomal RNA.

In terms of biological role, contacts the emerging nascent chain on the ribosome. This chain is Nascent polypeptide-associated complex protein, found in Methanococcus aeolicus (strain ATCC BAA-1280 / DSM 17508 / OCM 812 / Nankai-3).